The following is a 1067-amino-acid chain: Myocardin-related transcription factor B (1067 aa).

RPEL repeat units lie at residues 46–71 (EVLQLRLQQRRTREQLVDQGIMPPLK), 90–115 (NFLKHKIRSRPNRSELVRMHILEETL), and 134–159 (DDLNEKIAQRPGPLELVEKNILPVDL). Disordered stretches follow at residues 175-223 (NLDT…NTTI) and 249-286 (PLSCIVSKPGPALIKQTQPKHTEKPRSKKSKDPKPRVK). Composition is skewed to polar residues over residues 193–203 (QPASQESQGSA) and 212–223 (SDSSSPVSNTTI). A compositionally biased stretch (basic and acidic residues) spans 268–283 (KHTEKPRSKKSKDPKP). Positions 390–424 (LDDMKVAELKMELKLRGLPVSGTKMDLIERLKPFQ) constitute an SAP domain. Residues 540 to 594 (GNTPNVELDAVEKDRKLQEKEKQIEELKRKLEQEQKLVEVLKKQLELEKRGQQQQ) adopt a coiled-coil conformation. Over residues 799-819 (ISTSAQPQRSTQLTAVQNGPT) the composition is skewed to polar residues. The disordered stretch occupies residues 799-829 (ISTSAQPQRSTQLTAVQNGPTSLHEKSSTPP).

Interacts with SRF.

Its subcellular location is the nucleus. Poor transcriptional factor which uses the canonical single or multiple CArG boxes DNA sequence. Acts as a cofactor of serum response factor (SRF) with the potential to modulate SRF target genes. In Xenopus laevis (African clawed frog), this protein is Myocardin-related transcription factor B (mrtfb).